We begin with the raw amino-acid sequence, 298 residues long: Probable endonuclease 4 (298 aa).

9 residues coordinate Zn(2+): histidine 69, histidine 111, glutamate 146, aspartate 180, histidine 183, histidine 215, aspartate 228, histidine 230, and glutamate 260.

This sequence belongs to the AP endonuclease 2 family. Zn(2+) serves as cofactor.

It carries out the reaction Endonucleolytic cleavage to 5'-phosphooligonucleotide end-products.. In terms of biological role, endonuclease IV plays a role in DNA repair. It cleaves phosphodiester bonds at apurinic or apyrimidinic (AP) sites, generating a 3'-hydroxyl group and a 5'-terminal sugar phosphate. The protein is Probable endonuclease 4 of Bacillus cereus (strain AH820).